The primary structure comprises 232 residues: Myb-related protein 308 (232 aa).

2 consecutive HTH myb-type domains span residues 9–61 (KAHT…INYL) and 62–116 (RPDL…RRKL). 2 DNA-binding regions (H-T-H motif) span residues 37–61 (WRSL…INYL) and 89–112 (WSLI…NTHI).

As to expression, expressed in roots, stems, leaves, seed pods and flowers.

The protein localises to the nucleus. Its function is as follows. Transcription factor. The chain is Myb-related protein 308 from Antirrhinum majus (Garden snapdragon).